Reading from the N-terminus, the 198-residue chain is Heme oxygenase PigA (198 aa).

His26 provides a ligand contact to heme b.

This sequence belongs to the heme oxygenase family.

The enzyme catalyses heme b + 3 AH2 + 3 O2 + 2 H(+) = biliverdin IXbeta + CO + Fe(2+) + 3 A + 3 H2O. The catalysed reaction is heme b + 3 AH2 + 3 O2 + 3 H(+) = biliverdin IXdelta + CO + Fe(2+) + 3 A + 3 H2O. In terms of biological role, involved in heme degradation. Catalyzes the degradation of heme to biliverdin, with the release of iron. Forms biliverdin delta (70%) and beta (30%). Under anaerobic conditions ferredoxin--NADP(+) reductase (fpr) can provide the necessary electrons; Bfd is not required. This chain is Heme oxygenase PigA, found in Pseudomonas aeruginosa (strain ATCC 15692 / DSM 22644 / CIP 104116 / JCM 14847 / LMG 12228 / 1C / PRS 101 / PAO1).